The following is a 134-amino-acid chain: Small ribosomal subunit protein uS8c (134 aa).

Belongs to the universal ribosomal protein uS8 family. Part of the 30S ribosomal subunit.

It localises to the plastid. The protein resides in the chloroplast. Its function is as follows. One of the primary rRNA binding proteins, it binds directly to 16S rRNA central domain where it helps coordinate assembly of the platform of the 30S subunit. This is Small ribosomal subunit protein uS8c (rps8) from Lactuca sativa (Garden lettuce).